Here is a 496-residue protein sequence, read N- to C-terminus: Lysine--tRNA ligase (496 aa).

2 residues coordinate Mg(2+): Glu-407 and Glu-414.

This sequence belongs to the class-II aminoacyl-tRNA synthetase family. As to quaternary structure, homodimer. Mg(2+) serves as cofactor.

It is found in the cytoplasm. The enzyme catalyses tRNA(Lys) + L-lysine + ATP = L-lysyl-tRNA(Lys) + AMP + diphosphate. The chain is Lysine--tRNA ligase from Staphylococcus haemolyticus (strain JCSC1435).